The chain runs to 829 residues: Leucine--tRNA ligase (829 aa).

The 'HIGH' region signature appears at 40-50; the sequence is PYPSGNIHMGH. Positions 581–585 match the 'KMSKS' region motif; that stretch reads KMSKS. K584 is an ATP binding site.

This sequence belongs to the class-I aminoacyl-tRNA synthetase family.

It localises to the cytoplasm. It carries out the reaction tRNA(Leu) + L-leucine + ATP = L-leucyl-tRNA(Leu) + AMP + diphosphate. The chain is Leucine--tRNA ligase from Oleidesulfovibrio alaskensis (strain ATCC BAA-1058 / DSM 17464 / G20) (Desulfovibrio alaskensis).